The primary structure comprises 148 residues: Lysozyme C (148 aa).

Residues 1–18 form the signal peptide; it reads MKALIILGLVLLSVMVQA. The region spanning 19–148 is the C-type lysozyme domain; the sequence is KVFERCELAR…LRQYIQGCGV (130 aa). 4 disulfide bridges follow: C24–C146, C48–C134, C83–C99, and C95–C113. Residues E53 and D71 contribute to the active site.

This sequence belongs to the glycosyl hydrolase 22 family. As to quaternary structure, monomer.

Its subcellular location is the secreted. The enzyme catalyses Hydrolysis of (1-&gt;4)-beta-linkages between N-acetylmuramic acid and N-acetyl-D-glucosamine residues in a peptidoglycan and between N-acetyl-D-glucosamine residues in chitodextrins.. In terms of biological role, lysozymes have primarily a bacteriolytic function; those in tissues and body fluids are associated with the monocyte-macrophage system and enhance the activity of immunoagents. The sequence is that of Lysozyme C (LYZ) from Hylobates lar (Lar gibbon).